We begin with the raw amino-acid sequence, 166 residues long: Disulfide bond reductase DsbH (166 aa).

The N-terminal stretch at 1–22 is a signal peptide; the sequence is MKFWLQGCAFVGCLLLTLPCCA. The Thioredoxin domain occupies 32–166; the sequence is LQQTRPIAAA…SKVKSALKLR (135 aa). Cys72 and Cys75 form a disulfide bridge. Residue 73–74 participates in substrate binding; sequence MW.

In terms of assembly, monomer.

Its subcellular location is the periplasm. Functionally, catalyzes the reduction of disulfide bonds. May function in reducing intermolecular disulfides between proteins and small molecules in the periplasm, or keeping a specific subset of periplasmic proteins reduced, or maintaining the periplasm of Chlamydia in a generally reducing state. Seems to be unable to oxidize thiols into disulfides and does not display disulfide bond isomerase activity. The polypeptide is Disulfide bond reductase DsbH (dsbH) (Chlamydia pneumoniae (Chlamydophila pneumoniae)).